The primary structure comprises 635 residues: Threonine--tRNA ligase (635 aa).

In terms of domain architecture, TGS spans Met1–Thr61. The segment at Asp242 to Pro533 is catalytic. Cys333, His384, and His510 together coordinate Zn(2+).

The protein belongs to the class-II aminoacyl-tRNA synthetase family. In terms of assembly, homodimer. The cofactor is Zn(2+).

Its subcellular location is the cytoplasm. It carries out the reaction tRNA(Thr) + L-threonine + ATP = L-threonyl-tRNA(Thr) + AMP + diphosphate + H(+). Functionally, catalyzes the attachment of threonine to tRNA(Thr) in a two-step reaction: L-threonine is first activated by ATP to form Thr-AMP and then transferred to the acceptor end of tRNA(Thr). Also edits incorrectly charged L-seryl-tRNA(Thr). In Burkholderia pseudomallei (strain 1106a), this protein is Threonine--tRNA ligase.